We begin with the raw amino-acid sequence, 522 residues long: Glutathione reductase, mitochondrial (522 aa).

The N-terminal 43 residues, 1 to 43, are a transit peptide targeting the mitochondrion; the sequence is MALLPRALSAGAGPSWRRAARAFRGFLLLLPEPAALTRALSRA. Ser-74 and Gly-75 together coordinate FAD. Ser-74 is a glutathione binding site. Arg-81 provides a ligand contact to glutathione. Glu-94 provides a ligand contact to FAD. Residue Lys-97 is modified to N6-acetyllysine. FAD contacts are provided by Thr-101, Cys-102, and Lys-110. The cysteines at positions 102 and 107 are disulfide-linked. Glutathione is bound at residue Tyr-158. Residue Ala-174 participates in FAD binding. Residues Ala-239, Ile-242, Glu-245, Arg-262, Arg-268, and Gly-334 each coordinate NADP(+). Asp-375 is a binding site for FAD. Residue Leu-381 coordinates NADP(+). Thr-383 is an FAD binding site. Residue Arg-391 participates in glutathione binding. An NADP(+)-binding site is contributed by Val-414. His-511 contacts FAD. His-511 serves as the catalytic Proton acceptor.

It belongs to the class-I pyridine nucleotide-disulfide oxidoreductase family. As to quaternary structure, homodimer; disulfide-linked. Requires FAD as cofactor.

The protein resides in the mitochondrion. It localises to the cytoplasm. It catalyses the reaction 2 glutathione + NADP(+) = glutathione disulfide + NADPH + H(+). Catalyzes the reduction of glutathione disulfide (GSSG) to reduced glutathione (GSH). Constitutes the major mechanism to maintain a high GSH:GSSG ratio in the cytosol. The protein is Glutathione reductase, mitochondrial (GSR) of Homo sapiens (Human).